We begin with the raw amino-acid sequence, 201 residues long: Recombination protein RecR (201 aa).

The segment at 60-75 (CATCGNFDTVQPCAVC) adopts a C4-type zinc-finger fold. Residues 83–178 (GIICVVEDVP…DVTRLAHGVP (96 aa)) enclose the Toprim domain.

Belongs to the RecR family.

Its function is as follows. May play a role in DNA repair. It seems to be involved in an RecBC-independent recombinational process of DNA repair. It may act with RecF and RecO. The protein is Recombination protein RecR of Hyphomonas neptunium (strain ATCC 15444).